The following is a 120-amino-acid chain: Ribosome-binding factor A (120 aa).

It belongs to the RbfA family. As to quaternary structure, monomer. Binds 30S ribosomal subunits, but not 50S ribosomal subunits or 70S ribosomes.

The protein localises to the cytoplasm. In terms of biological role, one of several proteins that assist in the late maturation steps of the functional core of the 30S ribosomal subunit. Associates with free 30S ribosomal subunits (but not with 30S subunits that are part of 70S ribosomes or polysomes). Required for efficient processing of 16S rRNA. May interact with the 5'-terminal helix region of 16S rRNA. In Rickettsia peacockii (strain Rustic), this protein is Ribosome-binding factor A.